A 224-amino-acid chain; its full sequence is Myogenin (224 aa).

Residues serine 77 and serine 79 each carry the phosphoserine; by CaMK2G modification. The 52-residue stretch at 81-132 (DRRRAATLREKRRLKKVNEAFEALKRSTLLNPNQRLPKVEILRSAIQYIERL) folds into the bHLH domain. Residue threonine 87 is modified to Phosphothreonine; by CaMK2G.

Homodimer and heterodimer with E12; heterodimerization enhances MYOG DNA-binding and transcriptional activities. Interacts with SMARCA4/BRG1/BAF190A. Interacts (via C-terminal region) with SSRP1 and SUPT16H; the interaction is indicative of an interaction with the FACT complex. Interacts with CSRP3. Phosphorylated by CAMK2G on threonine and serine amino acids in a muscle activity-dependent manner. Phosphorylation of Thr-87 impairs both DNA-binding and trans-activation functions in contracting muscles.

The protein localises to the nucleus. In terms of biological role, acts as a transcriptional activator that promotes transcription of muscle-specific target genes and plays a role in muscle differentiation, cell cycle exit and muscle atrophy. Essential for the development of functional embryonic skeletal fiber muscle differentiation. However is dispensable for postnatal skeletal muscle growth; phosphorylation by CAMK2G inhibits its transcriptional activity in respons to muscle activity. Required for the recruitment of the FACT complex to muscle-specific promoter regions, thus promoting gene expression initiation. During terminal myoblast differentiation, plays a role as a strong activator of transcription at loci with an open chromatin structure previously initiated by MYOD1. Together with MYF5 and MYOD1, co-occupies muscle-specific gene promoter core regions during myogenesis. Also cooperates with myocyte-specific enhancer factor MEF2D and BRG1-dependent recruitment of SWI/SNF chromatin-remodeling enzymes to alter chromatin structure at myogenic late gene promoters. Facilitates cell cycle exit during terminal muscle differentiation through the up-regulation of miR-20a expression, which in turn represses genes involved in cell cycle progression. Binds to the E-box containing (E1) promoter region of the miR-20a gene. Also plays a role in preventing reversal of muscle cell differentiation. Contributes to the atrophy-related gene expression in adult denervated muscles. Induces fibroblasts to differentiate into myoblasts. This chain is Myogenin (MYOG), found in Bos taurus (Bovine).